Consider the following 487-residue polypeptide: Uronate isomerase (487 aa).

It belongs to the metallo-dependent hydrolases superfamily. Uronate isomerase family.

It catalyses the reaction D-glucuronate = D-fructuronate. It carries out the reaction aldehydo-D-galacturonate = keto-D-tagaturonate. The protein operates within carbohydrate metabolism; pentose and glucuronate interconversion. The protein is Uronate isomerase of Caulobacter vibrioides (strain ATCC 19089 / CIP 103742 / CB 15) (Caulobacter crescentus).